Consider the following 293-residue polypeptide: HTH-type transcriptional regulator HdfR (293 aa).

Residues 1–58 form the HTH lysR-type domain; it reads MDTELLKTFLEVSRTRHFGRAAESLYLTQSAVSFRIRQLENQLGANLFTRHRNNIRLT. The H-T-H motif DNA-binding region spans 18 to 37; it reads FGRAAESLYLTQSAVSFRIR.

The protein belongs to the LysR transcriptional regulatory family.

Negatively regulates the transcription of the flagellar master operon flhDC by binding to the upstream region of the operon. The chain is HTH-type transcriptional regulator HdfR from Yersinia enterocolitica serotype O:8 / biotype 1B (strain NCTC 13174 / 8081).